A 316-amino-acid polypeptide reads, in one-letter code: MPGQNYSTISEFILFGFSAFPHQMLPALFLLYLLMYLFTLLGNLVIMAAIWTEHRLHTPMYLFLCALSISEILFTVVITPRMLSDMLSTHRSITFIACANQLFFSFTFGYTHSFLLVVMGYDRYVAICRPLHYHALMSLQGCARLVAWSWAGGSLIGMALTIIIFHLTFCESNVIHHILCHVFSLLKLACGERTAFVTIAVILVCVTPLIGCLVFIILSYIFIVAAILRIPSTEGRHKTFSTCASHLTVVIVHYGFASIIYLKSRGLYSQYTDTLMSTTYTVFTPFLSPIIFSLRNKELKNAIIKSFHRNVCQQSI.

The Extracellular portion of the chain corresponds to 1-26 (MPGQNYSTISEFILFGFSAFPHQMLP). Residue Asn5 is glycosylated (N-linked (GlcNAc...) asparagine). A helical membrane pass occupies residues 27–47 (ALFLLYLLMYLFTLLGNLVIM). At 48–57 (AAIWTEHRLH) the chain is on the cytoplasmic side. A helical membrane pass occupies residues 58 to 78 (TPMYLFLCALSISEILFTVVI). The Extracellular segment spans residues 79-100 (TPRMLSDMLSTHRSITFIACAN). Cysteines 98 and 190 form a disulfide. The chain crosses the membrane as a helical span at residues 101–121 (QLFFSFTFGYTHSFLLVVMGY). Residues 122–144 (DRYVAICRPLHYHALMSLQGCAR) are Cytoplasmic-facing. A helical membrane pass occupies residues 145 to 165 (LVAWSWAGGSLIGMALTIIIF). The Extracellular segment spans residues 166 to 207 (HLTFCESNVIHHILCHVFSLLKLACGERTAFVTIAVILVCVT). A helical transmembrane segment spans residues 208–228 (PLIGCLVFIILSYIFIVAAIL). Residues 229–241 (RIPSTEGRHKTFS) lie on the Cytoplasmic side of the membrane. A helical membrane pass occupies residues 242–262 (TCASHLTVVIVHYGFASIIYL). Residues 263 to 273 (KSRGLYSQYTD) are Extracellular-facing. The chain crosses the membrane as a helical span at residues 274 to 294 (TLMSTTYTVFTPFLSPIIFSL). Topologically, residues 295–316 (RNKELKNAIIKSFHRNVCQQSI) are cytoplasmic.

It belongs to the G-protein coupled receptor 1 family.

Its subcellular location is the cell membrane. In terms of biological role, odorant receptor. The sequence is that of Olfactory receptor 10H28 from Mus musculus (Mouse).